Reading from the N-terminus, the 239-residue chain is Leucyl/phenylalanyl-tRNA--protein transferase (239 aa).

This sequence belongs to the L/F-transferase family.

The protein localises to the cytoplasm. The enzyme catalyses N-terminal L-lysyl-[protein] + L-leucyl-tRNA(Leu) = N-terminal L-leucyl-L-lysyl-[protein] + tRNA(Leu) + H(+). The catalysed reaction is N-terminal L-arginyl-[protein] + L-leucyl-tRNA(Leu) = N-terminal L-leucyl-L-arginyl-[protein] + tRNA(Leu) + H(+). It catalyses the reaction L-phenylalanyl-tRNA(Phe) + an N-terminal L-alpha-aminoacyl-[protein] = an N-terminal L-phenylalanyl-L-alpha-aminoacyl-[protein] + tRNA(Phe). Functions in the N-end rule pathway of protein degradation where it conjugates Leu, Phe and, less efficiently, Met from aminoacyl-tRNAs to the N-termini of proteins containing an N-terminal arginine or lysine. The chain is Leucyl/phenylalanyl-tRNA--protein transferase from Aliivibrio fischeri (strain ATCC 700601 / ES114) (Vibrio fischeri).